The sequence spans 635 residues: Threonine--tRNA ligase (635 aa).

Residues 1–58 enclose the TGS domain; the sequence is MIRVICNNETVELPKGATAADFASKIKNSHYFAGVVINDQIKDLSTTLNEGDTLRFVT. Residues 237 to 528 are catalytic; sequence DHRVLGAKLD…LIEHFKGKFP (292 aa). 3 residues coordinate Zn(2+): Cys-328, His-379, and His-505.

The protein belongs to the class-II aminoacyl-tRNA synthetase family. Homodimer. Zn(2+) is required as a cofactor.

The protein localises to the cytoplasm. It catalyses the reaction tRNA(Thr) + L-threonine + ATP = L-threonyl-tRNA(Thr) + AMP + diphosphate + H(+). Catalyzes the attachment of threonine to tRNA(Thr) in a two-step reaction: L-threonine is first activated by ATP to form Thr-AMP and then transferred to the acceptor end of tRNA(Thr). Also edits incorrectly charged L-seryl-tRNA(Thr). The protein is Threonine--tRNA ligase of Chlamydia caviae (strain ATCC VR-813 / DSM 19441 / 03DC25 / GPIC) (Chlamydophila caviae).